The following is a 385-amino-acid chain: Putative F-box protein At1g49610 (385 aa).

Positions 25–73 (VDSISSLPDVILQENLSLIPTKFAIRTSVLSKRWRHVWSETPSLDFDDC) constitute an F-box domain.

The chain is Putative F-box protein At1g49610 from Arabidopsis thaliana (Mouse-ear cress).